Reading from the N-terminus, the 274-residue chain is Large ribosomal subunit protein uL2cz/uL2cy (274 aa).

Disordered stretches follow at residues 1–21 and 225–274; these read MAIH…VDSQ and PVDH…RRSK.

It belongs to the universal ribosomal protein uL2 family. Part of the 50S ribosomal subunit.

Its subcellular location is the plastid. It is found in the chloroplast. The chain is Large ribosomal subunit protein uL2cz/uL2cy (rpl2-A) from Gossypium barbadense (Sea Island cotton).